A 191-amino-acid chain; its full sequence is Peptide methionine sulfoxide reductase MsrA (191 aa).

Cysteine 21 is a catalytic residue.

Belongs to the MsrA Met sulfoxide reductase family.

The enzyme catalyses L-methionyl-[protein] + [thioredoxin]-disulfide + H2O = L-methionyl-(S)-S-oxide-[protein] + [thioredoxin]-dithiol. The catalysed reaction is [thioredoxin]-disulfide + L-methionine + H2O = L-methionine (S)-S-oxide + [thioredoxin]-dithiol. Has an important function as a repair enzyme for proteins that have been inactivated by oxidation. Catalyzes the reversible oxidation-reduction of methionine sulfoxide in proteins to methionine. This is Peptide methionine sulfoxide reductase MsrA from Ralstonia nicotianae (strain ATCC BAA-1114 / GMI1000) (Ralstonia solanacearum).